Here is a 314-residue protein sequence, read N- to C-terminus: Replication initiation protein (314 aa).

A compositionally biased stretch (basic and acidic residues) spans 1–18; the sequence is MSKKAEEIQAKQSLEKEN. Residues 1–25 form a disordered region; it reads MSKKAEEIQAKQSLEKENSNFSKTG.

This sequence belongs to the plasmid replication initiation factor family.

Functionally, this protein is probably a specific topoisomerase involved in initiating replication. This protein is specifically required and may be rate-limiting for replication of the plasmid in vivo. The chain is Replication initiation protein (repE) from Staphylococcus aureus.